Here is a 608-residue protein sequence, read N- to C-terminus: Fatty acid amide hydrolase (608 aa).

Catalysis depends on charge relay system residues Lys206 and Ser282. 303 to 306 (GGGS) provides a ligand contact to substrate. The active-site Acyl-ester intermediate is Ser306.

Belongs to the amidase family. In terms of assembly, forms homodimers.

Its subcellular location is the endoplasmic reticulum membrane. The protein localises to the cell membrane. The enzyme catalyses N-(9Z,12Z-octadecadienoyl)-ethanolamine + H2O = ethanolamine + (9Z,12Z)-octadecadienoate. The catalysed reaction is N-hexadecanoylethanolamine + H2O = ethanolamine + hexadecanoate. It carries out the reaction N-dodecanoylethanolamine + H2O = dodecanoate + ethanolamine. Its activity is regulated as follows. Inhibited by methyl arachidonyl fluorophosphonate (MAFP). In terms of biological role, catalyzes the hydrolysis of bioactive endogenous fatty acid amides to their corresponding acids. The hydrolysis of endogenous amidated lipids terminates their participation as lipid mediators in various signaling systems. Converts a wide range of N-acylethanolamines (NAEs) to their corresponding free fatty acids and ethanolamine. This Oryza sativa subsp. japonica (Rice) protein is Fatty acid amide hydrolase.